The sequence spans 413 residues: MKTALLSIGDELLLGEVVDTNSARIAARLADEGIVTARKLTVGDDEGEIAGALEELARGHDVVIATGGLGPTDDDVTARAAARATGRRLVLNEEAMGHLREFFVRLGREMHPANGRQCLLPAKAELIPNPTGTASGFYLPLDRCLLMFLPGVPSEMAVMLDETVVPLVLERRGEHRRTRTLTLTVFGLSEAEIGARLSDLDRSRPGLTVAYCVEYPVVQVKLRATGEDEGALTALLEDGAALVRERLGGHVVAGDGETIDTTVARLFRETGMTLALAESCTGGLIAGRVTAIPGSSAYFFLSAVTYANDAKARLLGVPQGLLAETGAVSAEVAKAMARGARQLAGSDLALAVTGIAGPEGGSPDKPVGTVFIALADQAGCSAKGYHFRGDRDRIRTITAVTAMDWLRRRLLSH.

Belongs to the CinA family.

The chain is CinA-like protein from Geobacter metallireducens (strain ATCC 53774 / DSM 7210 / GS-15).